The chain runs to 28 residues: Cyclotide vodo I3 (28 aa).

3 cysteine pairs are disulfide-bonded: C4/C18, C8/C20, and C13/C25.

Post-translationally, this is a cyclic peptide. In terms of processing, contains 3 disulfide bonds.

Probably participates in a plant defense mechanism. The protein is Cyclotide vodo I3 of Viola odorata (Sweet violet).